Consider the following 89-residue polypeptide: Small ribosomal subunit protein uS15 (89 aa).

The protein belongs to the universal ribosomal protein uS15 family. In terms of assembly, part of the 30S ribosomal subunit. Forms a bridge to the 50S subunit in the 70S ribosome, contacting the 23S rRNA.

One of the primary rRNA binding proteins, it binds directly to 16S rRNA where it helps nucleate assembly of the platform of the 30S subunit by binding and bridging several RNA helices of the 16S rRNA. Functionally, forms an intersubunit bridge (bridge B4) with the 23S rRNA of the 50S subunit in the ribosome. The polypeptide is Small ribosomal subunit protein uS15 (Lactobacillus johnsonii (strain CNCM I-12250 / La1 / NCC 533)).